The primary structure comprises 131 residues: Large ribosomal subunit protein bL12 (131 aa).

Positions 100-125 (STPKPIKEGISKEDAEAAKKQLEDAG) are enriched in basic and acidic residues. The disordered stretch occupies residues 100–131 (STPKPIKEGISKEDAEAAKKQLEDAGGKVSIK).

This sequence belongs to the bacterial ribosomal protein bL12 family. In terms of assembly, homodimer. Part of the ribosomal stalk of the 50S ribosomal subunit. Forms a multimeric L10(L12)X complex, where L10 forms an elongated spine to which 2 to 4 L12 dimers bind in a sequential fashion. Binds GTP-bound translation factors.

Forms part of the ribosomal stalk which helps the ribosome interact with GTP-bound translation factors. Is thus essential for accurate translation. The sequence is that of Large ribosomal subunit protein bL12 from Cyanothece sp. (strain PCC 7425 / ATCC 29141).